We begin with the raw amino-acid sequence, 409 residues long: Histidine--tRNA ligase (409 aa).

This sequence belongs to the class-II aminoacyl-tRNA synthetase family. Homodimer.

The protein resides in the cytoplasm. It carries out the reaction tRNA(His) + L-histidine + ATP = L-histidyl-tRNA(His) + AMP + diphosphate + H(+). In Campylobacter fetus subsp. fetus (strain 82-40), this protein is Histidine--tRNA ligase.